Reading from the N-terminus, the 226-residue chain is Putative pyridoxamine 5'-phosphate oxidase (226 aa).

16–19 (LNSH) is a pyridoxal 5'-phosphate binding site. Residue 72-75 (RMVL) participates in FMN binding. K77 serves as a coordination point for pyridoxal 5'-phosphate. FMN contacts are provided by residues 87–88 (YT), 93–94 (RK), and Q116. Y134, R138, and S142 together coordinate pyridoxal 5'-phosphate. Residues 151 to 152 (QS) and W199 each bind FMN. 205–207 (RLH) contacts pyridoxal 5'-phosphate. FMN is bound at residue R209.

This sequence belongs to the pyridoxamine 5'-phosphate oxidase family. Homodimer. FMN is required as a cofactor.

It carries out the reaction pyridoxamine 5'-phosphate + O2 + H2O = pyridoxal 5'-phosphate + H2O2 + NH4(+). The catalysed reaction is pyridoxine 5'-phosphate + O2 = pyridoxal 5'-phosphate + H2O2. The protein operates within cofactor metabolism; pyridoxal 5'-phosphate salvage; pyridoxal 5'-phosphate from pyridoxamine 5'-phosphate: step 1/1. It participates in cofactor metabolism; pyridoxal 5'-phosphate salvage; pyridoxal 5'-phosphate from pyridoxine 5'-phosphate: step 1/1. In terms of biological role, catalyzes the oxidation of either pyridoxine 5'-phosphate (PNP) or pyridoxamine 5'-phosphate (PMP) into pyridoxal 5'-phosphate (PLP). The chain is Putative pyridoxamine 5'-phosphate oxidase from Caenorhabditis elegans.